A 721-amino-acid chain; its full sequence is Polyribonucleotide nucleotidyltransferase (721 aa).

D490 and D496 together coordinate Mg(2+). The region spanning 557–623 is the KH domain; the sequence is PRIISIKINP…RIAGLTKEAK (67 aa). An S1 motif domain is found at 625-693; the sequence is GEEYEGTVVK…DRGKIDLIRP (69 aa). Residues 693–721 are disordered; it reads PELEGKIAPREPRAPRGGGDRGPRPPRRD.

This sequence belongs to the polyribonucleotide nucleotidyltransferase family. The cofactor is Mg(2+).

The protein resides in the cytoplasm. The enzyme catalyses RNA(n+1) + phosphate = RNA(n) + a ribonucleoside 5'-diphosphate. In terms of biological role, involved in mRNA degradation. Catalyzes the phosphorolysis of single-stranded polyribonucleotides processively in the 3'- to 5'-direction. This Deinococcus deserti (strain DSM 17065 / CIP 109153 / LMG 22923 / VCD115) protein is Polyribonucleotide nucleotidyltransferase.